The primary structure comprises 397 residues: Trans-2-enoyl-CoA reductase [NADH] (397 aa).

NAD(+) is bound by residues 53-58, 79-80, 116-117, and 144-145; these read GCSNGY, FE, DA, and LA. Residue tyrosine 230 coordinates substrate. Tyrosine 240 functions as the Proton donor in the catalytic mechanism. NAD(+)-binding positions include lysine 249 and 276-278; that span reads LVT.

It belongs to the TER reductase family. As to quaternary structure, monomer.

The enzyme catalyses a 2,3-saturated acyl-CoA + NAD(+) = a (2E)-enoyl-CoA + NADH + H(+). The protein operates within lipid metabolism; fatty acid biosynthesis. Inhibited by lauroyl-CoA. In terms of biological role, involved in the fatty acid synthesis (FAS II). Catalyzes the reduction of the carbon-carbon double bond of crotonyl-CoA to yield butyryl-CoA. In vitro it can also use hexenoyl-CoA and dodecenoyl-CoA as substrates. This chain is Trans-2-enoyl-CoA reductase [NADH], found in Treponema denticola (strain ATCC 35405 / DSM 14222 / CIP 103919 / JCM 8153 / KCTC 15104).